The chain runs to 1018 residues: UPF0182 protein Francci3_3781 (1018 aa).

A run of 7 helical transmembrane segments spans residues 13–33, 60–80, 109–129, 167–187, 208–228, 250–270, and 283–303; these read TKVL…IAIF, ILLF…NIVL, MLLI…LSAA, FLLG…LLTH, AHIS…YYLD, AVLP…VLFI, and LGAG…PAIV. Composition is skewed to low complexity over residues 886 to 896 and 960 to 980; these read TTDAGQDGTPA and SSPA…SVPA. Disordered stretches follow at residues 886–920 and 960–1018; these read TTDA…AVGD and SSPA…PAPG. Over residues 981–995 the composition is skewed to pro residues; that stretch reads SPVPASPAAKPPAPS.

The protein belongs to the UPF0182 family.

It is found in the cell membrane. The polypeptide is UPF0182 protein Francci3_3781 (Frankia casuarinae (strain DSM 45818 / CECT 9043 / HFP020203 / CcI3)).